Reading from the N-terminus, the 349-residue chain is tRNA uridine(34) hydroxylase (349 aa).

Residues 146–240 (DDPDAVFIDM…YARKAREQGL (95 aa)) form the Rhodanese domain. Catalysis depends on C200, which acts as the Cysteine persulfide intermediate. Residues 314-328 (PEEEQRRRRAGRENG) show a composition bias toward basic and acidic residues. Positions 314–349 (PEEEQRRRRAGRENGNKIFNKSRGRLNTTLGIPDPE) are disordered.

It belongs to the TrhO family.

It carries out the reaction uridine(34) in tRNA + AH2 + O2 = 5-hydroxyuridine(34) in tRNA + A + H2O. In terms of biological role, catalyzes oxygen-dependent 5-hydroxyuridine (ho5U) modification at position 34 in tRNAs. The protein is tRNA uridine(34) hydroxylase of Cronobacter sakazakii (strain ATCC BAA-894) (Enterobacter sakazakii).